The primary structure comprises 254 residues: Zinc transporter GufA (254 aa).

Helical transmembrane passes span 4 to 24 (GLVA…PVLV), 74 to 94 (VAAG…LMPH), 112 to 132 (ALLF…AVGV), 143 to 163 (LSVA…VALA), 176 to 196 (FLAL…VLAL), 198 to 218 (LSSA…LYVI), and 234 to 254 (EATT…MSLG). Zn(2+)-binding residues include Asn123, Glu126, Gln152, Asn153, Glu156, and Glu185.

It belongs to the ZIP transporter (TC 2.A.5) family. In terms of assembly, homodimer.

It is found in the cell inner membrane. Functionally, mediates the uptake of Zn(2+). This Myxococcus xanthus protein is Zinc transporter GufA (gufA).